A 384-amino-acid chain; its full sequence is Branched-chain-amino-acid aminotransferase 1, mitochondrial (384 aa).

A mitochondrion-targeting transit peptide spans 1–18; that stretch reads MALRRCLPQYSTTSSYLS. Lys-231 bears the N6-(pyridoxal phosphate)lysine mark.

The protein belongs to the class-IV pyridoxal-phosphate-dependent aminotransferase family. It depends on pyridoxal 5'-phosphate as a cofactor.

The protein localises to the mitochondrion. It carries out the reaction L-leucine + 2-oxoglutarate = 4-methyl-2-oxopentanoate + L-glutamate. The catalysed reaction is L-isoleucine + 2-oxoglutarate = (S)-3-methyl-2-oxopentanoate + L-glutamate. It catalyses the reaction L-valine + 2-oxoglutarate = 3-methyl-2-oxobutanoate + L-glutamate. It participates in amino-acid degradation; L-leucine degradation; 4-methyl-2-oxopentanoate from L-leucine (aminotransferase route): step 1/1. Its pathway is amino-acid degradation; L-valine degradation. Converts 2-oxo acids to branched-chain amino acids. Acts on leucine, isoleucine and valine. This chain is Branched-chain-amino-acid aminotransferase 1, mitochondrial (BCAT1), found in Arabidopsis thaliana (Mouse-ear cress).